A 100-amino-acid chain; its full sequence is Urease subunit gamma (100 aa).

It belongs to the urease gamma subunit family. As to quaternary structure, heterotrimer of UreA (gamma), UreB (beta) and UreC (alpha) subunits. Three heterotrimers associate to form the active enzyme.

The protein localises to the cytoplasm. It catalyses the reaction urea + 2 H2O + H(+) = hydrogencarbonate + 2 NH4(+). It functions in the pathway nitrogen metabolism; urea degradation; CO(2) and NH(3) from urea (urease route): step 1/1. The polypeptide is Urease subunit gamma (Cupriavidus taiwanensis (strain DSM 17343 / BCRC 17206 / CCUG 44338 / CIP 107171 / LMG 19424 / R1) (Ralstonia taiwanensis (strain LMG 19424))).